Consider the following 281-residue polypeptide: Sorbose reductase SOU1 (281 aa).

NADP(+) is bound by residues Ile47, Lys74, and Asn119. Catalysis depends on proton donor residues Ser173 and Tyr188. Positions 188, 192, 221, and 223 each coordinate NADP(+). The active-site Lowers pKa of active site Tyr is Lys192.

Belongs to the short-chain dehydrogenases/reductases (SDR) family. As to quaternary structure, homotetramer.

The catalysed reaction is D-sorbitol + NADP(+) = keto-L-sorbose + NADPH + H(+). Its pathway is carbohydrate degradation; L-sorbose degradation. In terms of biological role, catalyzes the NADP dependent reduction of L-sorbose to D-glucitol. Can also convert fructose to mannitol, but less efficiently. The polypeptide is Sorbose reductase SOU1 (SOU1) (Candida albicans (strain SC5314 / ATCC MYA-2876) (Yeast)).